Here is a 671-residue protein sequence, read N- to C-terminus: DNA ligase (671 aa).

NAD(+)-binding positions include 32 to 36 (DAEYD), 81 to 82 (SL), and glutamate 113. Residue lysine 115 is the N6-AMP-lysine intermediate of the active site. Residues arginine 136, glutamate 173, lysine 290, and lysine 314 each coordinate NAD(+). Cysteine 408, cysteine 411, cysteine 426, and cysteine 432 together coordinate Zn(2+). Residues 593-671 (EIDSPFAGKT…EAEMLRLLGS (79 aa)) enclose the BRCT domain.

This sequence belongs to the NAD-dependent DNA ligase family. LigA subfamily. Mg(2+) is required as a cofactor. Mn(2+) serves as cofactor.

The enzyme catalyses NAD(+) + (deoxyribonucleotide)n-3'-hydroxyl + 5'-phospho-(deoxyribonucleotide)m = (deoxyribonucleotide)n+m + AMP + beta-nicotinamide D-nucleotide.. Functionally, DNA ligase that catalyzes the formation of phosphodiester linkages between 5'-phosphoryl and 3'-hydroxyl groups in double-stranded DNA using NAD as a coenzyme and as the energy source for the reaction. It is essential for DNA replication and repair of damaged DNA. This chain is DNA ligase, found in Escherichia coli O157:H7.